The primary structure comprises 360 residues: Glucan endo-1,3-beta-glucosidase B (360 aa).

The N-terminal stretch at 1–25 (MATSQIAIIVLLGLLVATNIHITEA) is a signal peptide. Pyrrolidone carboxylic acid is present on glutamine 26. Catalysis depends on glutamate 120, which acts as the Proton donor. Catalysis depends on glutamate 265, which acts as the Nucleophile. The propeptide at 341 to 360 (VSERVWDITNSTASSLTSEI) is removed in mature form. N-linked (GlcNAc...) asparagine glycosylation is present at asparagine 350.

It belongs to the glycosyl hydrolase 17 family.

It localises to the vacuole. The enzyme catalyses Hydrolysis of (1-&gt;3)-beta-D-glucosidic linkages in (1-&gt;3)-beta-D-glucans.. Functionally, implicated in the defense of plants against pathogens. This chain is Glucan endo-1,3-beta-glucosidase B, found in Solanum lycopersicum (Tomato).